Here is a 299-residue protein sequence, read N- to C-terminus: MDATFPPQRNITARPAPDRIRREQCKLAKRLRRQVGQAIADFGMIEANDKIMVCLSGGKDSYTLLDMLLQLRAKAPVPFELTAVNLDQKQPGFPKHVLPEYLSSIGMPHHIIEQDTYSVVTRVVPEGKTLCALCSRMRRGALYAYAETQGFTKIALGHHRDDMVATFFMNLFHHAKLSGMPPKLRSDNGKHVVIRPLAYVSETDIIAYADAREFPIIPCNLCGSQENLQRKQVGVILKAWEKEYPGRIEQIARALGNIRPSQLADQSLFDFQALGRHSNTPLPNAHAWLAGDLANDTAP.

The PP-loop motif signature appears at 56–61; that stretch reads SGGKDS. [4Fe-4S] cluster contacts are provided by Cys-131, Cys-134, and Cys-222.

Belongs to the TtcA family. As to quaternary structure, homodimer. It depends on Mg(2+) as a cofactor. [4Fe-4S] cluster is required as a cofactor.

The protein localises to the cytoplasm. It carries out the reaction cytidine(32) in tRNA + S-sulfanyl-L-cysteinyl-[cysteine desulfurase] + AH2 + ATP = 2-thiocytidine(32) in tRNA + L-cysteinyl-[cysteine desulfurase] + A + AMP + diphosphate + H(+). It functions in the pathway tRNA modification. In terms of biological role, catalyzes the ATP-dependent 2-thiolation of cytidine in position 32 of tRNA, to form 2-thiocytidine (s(2)C32). The sulfur atoms are provided by the cysteine/cysteine desulfurase (IscS) system. The protein is tRNA-cytidine(32) 2-sulfurtransferase of Xylella fastidiosa (strain 9a5c).